The chain runs to 3013 residues: Protein furry homolog-like (3013 aa).

Position 2 is an N-acetylserine (Ser-2). Positions 90–109 (DESYEYRPRSSTKSKGDEQQ) are disordered. At Ser-844 the chain carries Phosphoserine. Disordered regions lie at residues 878 to 897 (SSSTSAGSVRCSPPETLAST) and 1476 to 1498 (VTSGTTSSSNTMVAPTDGNPDNK). Positions 1476–1486 (VTSGTTSSSNT) are enriched in low complexity. Residues Ser-1914, Ser-1935, Ser-1941, Ser-1945, and Ser-1957 each carry the phosphoserine modification. A Phosphothreonine modification is found at Thr-1959. Residues Ser-1978, Ser-2272, and Ser-2454 each carry the phosphoserine modification. A disordered region spans residues 2459-2492 (DKGDTPSLQEYQCSSSTPSLNLTNQEDTDESSEE). Residues 2464-2483 (PSLQEYQCSSSTPSLNLTNQ) show a composition bias toward polar residues. Position 2499 is a phosphoserine (Ser-2499). Disordered stretches follow at residues 2508-2567 (LNSD…DTTS) and 2636-2660 (EEEADFSGLSSQDEEEQDGFPEVQT). Composition is skewed to polar residues over residues 2528–2539 (SEDSTGSITTEE) and 2555–2567 (DNANSRLPEDTTS).

It belongs to the furry protein family. Widely expressed with higher expression in colon, placenta, brain and cells of lymphoid origin.

Its function is as follows. Plays a key role in maintaining the integrity of polarized cell extensions during morphogenesis, regulates the actin cytoskeleton and plays a key role in patterning sensory neuron dendritic fields by promoting avoidance between homologous dendrites as well as by limiting dendritic branching. May function as a transcriptional activator. The protein is Protein furry homolog-like (FRYL) of Homo sapiens (Human).